The chain runs to 491 residues: Protein nucleotidyltransferase YdiU (491 aa).

ATP contacts are provided by glycine 94, glycine 96, arginine 97, lysine 117, aspartate 129, glycine 130, arginine 180, and arginine 187. Aspartate 256 serves as the catalytic Proton acceptor. Positions 257 and 266 each coordinate Mg(2+). An ATP-binding site is contributed by aspartate 266.

Belongs to the SELO family. It depends on Mg(2+) as a cofactor. Mn(2+) serves as cofactor.

It catalyses the reaction L-seryl-[protein] + ATP = 3-O-(5'-adenylyl)-L-seryl-[protein] + diphosphate. The enzyme catalyses L-threonyl-[protein] + ATP = 3-O-(5'-adenylyl)-L-threonyl-[protein] + diphosphate. It carries out the reaction L-tyrosyl-[protein] + ATP = O-(5'-adenylyl)-L-tyrosyl-[protein] + diphosphate. The catalysed reaction is L-histidyl-[protein] + UTP = N(tele)-(5'-uridylyl)-L-histidyl-[protein] + diphosphate. It catalyses the reaction L-seryl-[protein] + UTP = O-(5'-uridylyl)-L-seryl-[protein] + diphosphate. The enzyme catalyses L-tyrosyl-[protein] + UTP = O-(5'-uridylyl)-L-tyrosyl-[protein] + diphosphate. Nucleotidyltransferase involved in the post-translational modification of proteins. It can catalyze the addition of adenosine monophosphate (AMP) or uridine monophosphate (UMP) to a protein, resulting in modifications known as AMPylation and UMPylation. The chain is Protein nucleotidyltransferase YdiU from Clostridium botulinum (strain ATCC 19397 / Type A).